A 303-amino-acid chain; its full sequence is Mycothiol acetyltransferase (303 aa).

2 N-acetyltransferase domains span residues Met-1–Asp-150 and Val-162–Arg-303. Glu-18 provides a ligand contact to 1D-myo-inositol 2-(L-cysteinylamino)-2-deoxy-alpha-D-glucopyranoside. Position 77–79 (Leu-77–Val-79) interacts with acetyl-CoA. 3 residues coordinate 1D-myo-inositol 2-(L-cysteinylamino)-2-deoxy-alpha-D-glucopyranoside: Glu-189, Lys-229, and Glu-237. Residues Val-241–Val-243 and Gln-248–Arg-254 contribute to the acetyl-CoA site. Tyr-275 is a 1D-myo-inositol 2-(L-cysteinylamino)-2-deoxy-alpha-D-glucopyranoside binding site. Asn-280–Lys-285 provides a ligand contact to acetyl-CoA.

The protein belongs to the acetyltransferase family. MshD subfamily. As to quaternary structure, monomer.

It catalyses the reaction 1D-myo-inositol 2-(L-cysteinylamino)-2-deoxy-alpha-D-glucopyranoside + acetyl-CoA = mycothiol + CoA + H(+). Its function is as follows. Catalyzes the transfer of acetyl from acetyl-CoA to desacetylmycothiol (Cys-GlcN-Ins) to form mycothiol. The protein is Mycothiol acetyltransferase of Saccharopolyspora erythraea (strain ATCC 11635 / DSM 40517 / JCM 4748 / NBRC 13426 / NCIMB 8594 / NRRL 2338).